The following is a 475-amino-acid chain: Probable GABA permease (475 aa).

A run of 12 helical transmembrane segments spans residues 27–47 (VTML…SGHA), 48–68 (IAAA…LVVL), 105–125 (LYWW…AAIL), 127–147 (AWFP…LLTV), 163–183 (FALL…VAIV), 211–231 (AVLG…IVTI), 250–270 (VIWR…SIVP), 296–316 (LIVD…AIYT), 345–365 (PAVL…YFAP), 368–388 (VFTF…LVIA), 413–433 (PWLT…MLIM), and 438–458 (HEVF…LLNA).

The protein belongs to the amino acid-polyamine-organocation (APC) superfamily. Amino acid transporter (AAT) (TC 2.A.3.1) family.

The protein localises to the membrane. Involved in the degradation of beta-alanine. In Pseudomonas aeruginosa (strain ATCC 15692 / DSM 22644 / CIP 104116 / JCM 14847 / LMG 12228 / 1C / PRS 101 / PAO1), this protein is Probable GABA permease (bauD).